A 373-amino-acid polypeptide reads, in one-letter code: Bifunctional enzyme IspD/IspF (373 aa).

The segment at 1-212 (MPDITLILLG…PCIEAPSGKT (212 aa)) is 2-C-methyl-D-erythritol 4-phosphate cytidylyltransferase. The tract at residues 213-373 (LTGFGLDIHP…NLTYYNWKQK (161 aa)) is 2-C-methyl-D-erythritol 2,4-cyclodiphosphate synthase. Positions 219 and 221 each coordinate a divalent metal cation. 4-CDP-2-C-methyl-D-erythritol 2-phosphate-binding positions include 219–221 (DIH) and 245–246 (HS). An a divalent metal cation-binding site is contributed by His-253. 4-CDP-2-C-methyl-D-erythritol 2-phosphate contacts are provided by residues 267–269 (DIG), 272–276 (YPDTD), 343–346 (TTAE), Phe-350, and Arg-353.

It in the N-terminal section; belongs to the IspD/TarI cytidylyltransferase family. IspD subfamily. In the C-terminal section; belongs to the IspF family. It depends on a divalent metal cation as a cofactor.

The enzyme catalyses 2-C-methyl-D-erythritol 4-phosphate + CTP + H(+) = 4-CDP-2-C-methyl-D-erythritol + diphosphate. It carries out the reaction 4-CDP-2-C-methyl-D-erythritol 2-phosphate = 2-C-methyl-D-erythritol 2,4-cyclic diphosphate + CMP. Its pathway is isoprenoid biosynthesis; isopentenyl diphosphate biosynthesis via DXP pathway; isopentenyl diphosphate from 1-deoxy-D-xylulose 5-phosphate: step 2/6. It participates in isoprenoid biosynthesis; isopentenyl diphosphate biosynthesis via DXP pathway; isopentenyl diphosphate from 1-deoxy-D-xylulose 5-phosphate: step 4/6. Bifunctional enzyme that catalyzes the formation of 4-diphosphocytidyl-2-C-methyl-D-erythritol from CTP and 2-C-methyl-D-erythritol 4-phosphate (MEP) (IspD), and catalyzes the conversion of 4-diphosphocytidyl-2-C-methyl-D-erythritol 2-phosphate (CDP-ME2P) to 2-C-methyl-D-erythritol 2,4-cyclodiphosphate (ME-CPP) with a corresponding release of cytidine 5-monophosphate (CMP) (IspF). The protein is Bifunctional enzyme IspD/IspF of Sulfurovum sp. (strain NBC37-1).